We begin with the raw amino-acid sequence, 541 residues long: uncharacterized protein (541 aa).

The signal sequence occupies residues 1-22; that stretch reads MQFKYGALIFSGFLGLSIVLAS. Cys23 carries N-palmitoyl cysteine lipidation. Cys23 carries S-diacylglycerol cysteine lipidation. Disordered regions lie at residues 446–468 and 480–514; these read APGQSSQKEGGQQQSNSKDNGNL and KTKTEVKKTEDTQNQGKKAEGTPNQGKKAEGTENQ. Residues 448–460 show a composition bias toward low complexity; it reads GQSSQKEGGQQQS. Positions 480 to 490 are enriched in basic and acidic residues; sequence KTKTEVKKTED.

It belongs to the MG185/MG260 family.

The protein localises to the cell membrane. This is an uncharacterized protein from Mycoplasma pneumoniae (strain ATCC 29342 / M129 / Subtype 1) (Mycoplasmoides pneumoniae).